A 407-amino-acid chain; its full sequence is Imidazolonepropionase (407 aa).

Fe(3+)-binding residues include histidine 68 and histidine 70. Zn(2+)-binding residues include histidine 68 and histidine 70. 4-imidazolone-5-propanoate contacts are provided by arginine 77, tyrosine 140, and histidine 173. Residue tyrosine 140 coordinates N-formimidoyl-L-glutamate. Position 238 (histidine 238) interacts with Fe(3+). Residue histidine 238 coordinates Zn(2+). Glutamine 241 contacts 4-imidazolone-5-propanoate. Aspartate 313 provides a ligand contact to Fe(3+). Residue aspartate 313 participates in Zn(2+) binding. Residues asparagine 315 and glycine 317 each coordinate N-formimidoyl-L-glutamate. Threonine 318 serves as a coordination point for 4-imidazolone-5-propanoate.

It belongs to the metallo-dependent hydrolases superfamily. HutI family. Requires Zn(2+) as cofactor. The cofactor is Fe(3+).

The protein localises to the cytoplasm. The catalysed reaction is 4-imidazolone-5-propanoate + H2O = N-formimidoyl-L-glutamate. It participates in amino-acid degradation; L-histidine degradation into L-glutamate; N-formimidoyl-L-glutamate from L-histidine: step 3/3. Its function is as follows. Catalyzes the hydrolytic cleavage of the carbon-nitrogen bond in imidazolone-5-propanoate to yield N-formimidoyl-L-glutamate. It is the third step in the universal histidine degradation pathway. In Burkholderia cenocepacia (strain HI2424), this protein is Imidazolonepropionase.